Here is a 1157-residue protein sequence, read N- to C-terminus: Pesticidal crystal protein Cry9Ca (1157 aa).

The protein belongs to the delta endotoxin family.

Promotes colloidosmotic lysis by binding to the midgut epithelial cells of Lepidoptera larvae. Has a fairly broad spectrum of activity against members of the Pyralidae, Plutellidae, Sphingidae and Noctuidae families. It was the first insecticidal crystal protein characterized with activity against cutworms. No activity is observed against some beetles, such as the Colorado potato beetle. This chain is Pesticidal crystal protein Cry9Ca (cry9Ca), found in Bacillus thuringiensis subsp. tolworthi.